We begin with the raw amino-acid sequence, 51 residues long: Large ribosomal subunit protein eL39 (51 aa).

Belongs to the eukaryotic ribosomal protein eL39 family.

This Methanocaldococcus jannaschii (strain ATCC 43067 / DSM 2661 / JAL-1 / JCM 10045 / NBRC 100440) (Methanococcus jannaschii) protein is Large ribosomal subunit protein eL39 (rpl39e).